The following is a 143-amino-acid chain: Transcriptional regulator MraZ (143 aa).

2 SpoVT-AbrB domains span residues 5-47 and 76-119; these read THTP…PRAE and TDEQ…DAQA.

The protein belongs to the MraZ family. As to quaternary structure, forms oligomers.

Its subcellular location is the cytoplasm. It localises to the nucleoid. The protein is Transcriptional regulator MraZ of Mycobacterium leprae (strain Br4923).